The following is a 402-amino-acid chain: 2,3-bisphosphoglycerate-independent phosphoglycerate mutase (402 aa).

Residues 155–174 (SMVSDSDPHRENERPMEVRP) are disordered. Over residues 160 to 174 (SDPHRENERPMEVRP) the composition is skewed to basic and acidic residues.

Belongs to the BPG-independent phosphoglycerate mutase family. A-PGAM subfamily.

It carries out the reaction (2R)-2-phosphoglycerate = (2R)-3-phosphoglycerate. It functions in the pathway carbohydrate degradation; glycolysis; pyruvate from D-glyceraldehyde 3-phosphate: step 3/5. Its function is as follows. Catalyzes the interconversion of 2-phosphoglycerate and 3-phosphoglycerate. This is 2,3-bisphosphoglycerate-independent phosphoglycerate mutase from Picrophilus torridus (strain ATCC 700027 / DSM 9790 / JCM 10055 / NBRC 100828 / KAW 2/3).